The chain runs to 469 residues: Interstitial collagenase (469 aa).

Positions 1–18 (MLSLPLLLLLLWGMGSHS) are cleaved as a signal peptide. Residues 19–99 (FPTVPSETRE…PRCGVPDVAE (81 aa)) constitute a propeptide, activation peptide. The short motif at 90-97 (PRCGVPDV) is the Cysteine switch element. Cys92 is a binding site for Zn(2+). The Ca(2+) site is built by Asp124 and Asp158. The Zn(2+) site is built by His168 and Asp170. Residues Asp175, Gly176, Gly178, and Asn180 each coordinate Ca(2+). Zn(2+) is bound at residue His183. Ca(2+) is bound by residues Arg190, Gly192, and Asp194. Zn(2+) is bound at residue His196. The Ca(2+) site is built by Asp198, Glu199, and Glu201. His218 lines the Zn(2+) pocket. The active site involves Glu219. Zn(2+) contacts are provided by His222 and His228. Phosphothreonine is present on Thr274. Hemopexin repeat units follow at residues 275–324 (PEVC…WPQL), 325–371 (PNGL…FGFP), 374–422 (VKNI…FPGI), and 423–466 (GDKV…WFNC). Cys278 and Cys466 are joined by a disulfide. Residues Asp285 and Gln329 each coordinate Ca(2+). Residue Tyr360 is modified to Phosphotyrosine; by PKDCC. Residues Asp378 and Asp427 each coordinate Ca(2+).

The protein belongs to the peptidase M10A family. Requires Ca(2+) as cofactor. Zn(2+) is required as a cofactor. Post-translationally, tyrosine phosphorylated in platelets by PKDCC/VLK.

The protein localises to the secreted. The protein resides in the extracellular space. It is found in the extracellular matrix. The enzyme catalyses Cleavage of the triple helix of collagen at about three-quarters of the length of the molecule from the N-terminus, at 775-Gly-|-Ile-776 in the alpha1(I) chain. Cleaves synthetic substrates and alpha-macroglobulins at bonds where P1' is a hydrophobic residue.. Can be activated without removal of the activation peptide. Cleaves collagens of types I, II, and III at one site in the helical domain. Also cleaves collagens of types VII and X. The chain is Interstitial collagenase (MMP1) from Equus caballus (Horse).